The following is a 61-amino-acid chain: Small venom protein 1 (61 aa).

The first 20 residues, 1 to 20 (MRCVAIFLVVICAFVLQALA), serve as a signal peptide directing secretion.

Expressed by the venom gland.

It localises to the secreted. In Pimpla hypochondriaca (Parasitoid wasp), this protein is Small venom protein 1.